The chain runs to 548 residues: Chaperonin GroEL (548 aa).

Residues 29 to 32 (TLGP), K50, 86 to 90 (DGTTT), G414, 478 to 480 (NAA), and D494 each bind ATP.

This sequence belongs to the chaperonin (HSP60) family. In terms of assembly, forms a cylinder of 14 subunits composed of two heptameric rings stacked back-to-back. Interacts with the co-chaperonin GroES.

Its subcellular location is the cytoplasm. It catalyses the reaction ATP + H2O + a folded polypeptide = ADP + phosphate + an unfolded polypeptide.. Its function is as follows. Together with its co-chaperonin GroES, plays an essential role in assisting protein folding. The GroEL-GroES system forms a nano-cage that allows encapsulation of the non-native substrate proteins and provides a physical environment optimized to promote and accelerate protein folding. This is Chaperonin GroEL from Psychrobacter sp. (strain PRwf-1).